The primary structure comprises 149 residues: 3-dehydroquinate dehydratase (149 aa).

Tyr-23 acts as the Proton acceptor in catalysis. Positions 75, 81, and 88 each coordinate substrate. His-101 serves as the catalytic Proton donor. Residues 102–103 and Arg-112 each bind substrate; that span reads MS.

It belongs to the type-II 3-dehydroquinase family. Homododecamer.

It catalyses the reaction 3-dehydroquinate = 3-dehydroshikimate + H2O. It participates in metabolic intermediate biosynthesis; chorismate biosynthesis; chorismate from D-erythrose 4-phosphate and phosphoenolpyruvate: step 3/7. In terms of biological role, catalyzes a trans-dehydration via an enolate intermediate. The polypeptide is 3-dehydroquinate dehydratase (Pelobacter propionicus (strain DSM 2379 / NBRC 103807 / OttBd1)).